Reading from the N-terminus, the 1043-residue chain is Desmoglein-1 (1043 aa).

Residues 1–23 (MNWPFFRAAVVLFIFLVVLEVNS) form the signal peptide. Residues 24–49 (DFRIQVRDYNTKNGTIKWHSLRRQKR) constitute a propeptide that is removed on maturation. Cadherin domains follow at residues 50 to 158 (EWIK…PVFS), 159 to 270 (MSTF…PYME), 271 to 385 (LPTQ…GSVF), and 386 to 498 (RPGS…VNGS). The Extracellular segment spans residues 50–551 (EWIKFAAACR…PLRDNVHFGP (502 aa)). Residues Asn-110 and Asn-180 are each glycosylated (N-linked (GlcNAc...) asparagine). Asn-496 is a glycosylation site (N-linked (GlcNAc...) asparagine). A helical membrane pass occupies residues 552–572 (AGIGLLIMGFLVLGLVPFLLM). Residues 573–1043 (CCDCGGAPGG…TKYSTVQYTK (471 aa)) lie on the Cytoplasmic side of the membrane. The segment at 770 to 807 (DVEPFPDSDPSWPPKSTEPVCPPQGTEPTGGGHPPISP) is disordered. Desmoglein repeat repeat units follow at residues 819–845 (TYPS…TVTE), 846–875 (SYTS…ERVV), 876–905 (GPIS…ERVI), 906–933 (APSS…ERVI), and 934–962 (QPTS…ERVV).

In terms of assembly, binds to JUP/plakoglobin. Interacts with PKP2. Interacts with DSC3; there is evidence to suggest that the interaction promotes cell-cell adhesion of keratinocytes. As to expression, expressed in the epidermis. Expressed in the muzzle epithelium.

It is found in the cell membrane. Its subcellular location is the cell junction. The protein resides in the desmosome. The protein localises to the cytoplasm. It localises to the nucleus. In terms of biological role, component of intercellular desmosome junctions. Involved in the interaction of plaque proteins and intermediate filaments mediating cell-cell adhesion. The sequence is that of Desmoglein-1 (DSG1) from Bos taurus (Bovine).